The sequence spans 93 residues: uncharacterized protein (93 aa).

The Sm domain occupies 1 to 76 (MDSHTTEKRR…IQTIEPDESM (76 aa)).

In terms of assembly, part of the core SMN complex at least composed of smn1, yip11/gem2, gem6, gem7 and gem8. Interacts with gem7; the interaction is direct.

The SMN complex catalyzes the assembly of small nuclear ribonucleoproteins (snRNPs), the building blocks of the spliceosome, and thereby plays an important role in the splicing of cellular pre-mRNAs. Most spliceosomal snRNPs contain a common set of Sm proteins smb1, smd1, smd2, smd3, sme1, smf1 and smg1 that assemble in a heptameric protein ring on the Sm site of the small nuclear RNA to form the core snRNP (Sm core). In the cytosol, the Sm proteins smd1, smd2, sme1, smf1 and smg1 (5Sm) are trapped in an inactive 6S pICln-Sm complex by the chaperone saf5. To complete assembly of core snRNPs, the SMN complex accepts 5Sm from saf5. Binding of snRNA inside 5Sm triggers eviction of the SMN complex, thereby allowing binding of smd3 and smb1 to complete assembly of the core snRNP. This is an uncharacterized protein from Schizosaccharomyces pombe (strain 972 / ATCC 24843) (Fission yeast).